Reading from the N-terminus, the 158-residue chain is UPF0262 protein RHOS4_22360 (158 aa).

This sequence belongs to the UPF0262 family.

This Cereibacter sphaeroides (strain ATCC 17023 / DSM 158 / JCM 6121 / CCUG 31486 / LMG 2827 / NBRC 12203 / NCIMB 8253 / ATH 2.4.1.) (Rhodobacter sphaeroides) protein is UPF0262 protein RHOS4_22360.